Here is a 30-residue protein sequence, read N- to C-terminus: Root cyclotide 1 (30 aa).

The cyclopeptide (Gly-Asn) cross-link spans 1–30 (GIPCAESCVWIPCTVTALLGCSCSNKVCYN). Disulfide bonds link C4-C21, C8-C23, and C13-C28.

Post-translationally, this is a cyclic peptide. Expressed in roots.

In terms of biological role, probably participates in a plant defense mechanism. The sequence is that of Root cyclotide 1 from Viola hederacea (Australian violet).